Consider the following 188-residue polypeptide: Ribose 1,5-bisphosphate phosphokinase PhnN (188 aa).

9-16 (GPSGAGKD) contributes to the ATP binding site.

This sequence belongs to the ribose 1,5-bisphosphokinase family.

The catalysed reaction is alpha-D-ribose 1,5-bisphosphate + ATP = 5-phospho-alpha-D-ribose 1-diphosphate + ADP. Its pathway is metabolic intermediate biosynthesis; 5-phospho-alpha-D-ribose 1-diphosphate biosynthesis; 5-phospho-alpha-D-ribose 1-diphosphate from D-ribose 5-phosphate (route II): step 3/3. Catalyzes the phosphorylation of ribose 1,5-bisphosphate to 5-phospho-D-ribosyl alpha-1-diphosphate (PRPP). The protein is Ribose 1,5-bisphosphate phosphokinase PhnN of Pectobacterium parmentieri (strain WPP163) (Pectobacterium wasabiae (strain WPP163)).